The chain runs to 25 residues: Non-specific lipid-transfer protein 3 (25 aa).

As to expression, seeds (at protein level).

In terms of biological role, plant non-specific lipid-transfer proteins transfer phospholipids as well as galactolipids across membranes. May play a role in wax or cutin deposition in the cell walls of expanding epidermal cells and certain secretory tissues. Has antibacterial and antifungal activity. Displays antibacterial activity towards both Gram-negative bacteria, P.carotovorum (IC(50)=11.5 uM) and P.syringae (IC(50)=12.0 uM), and Gram-positive bacterium C.michiganensis subsp michiganense (IC(50)=11.2 uM). Also displays antifungal activity towards A.niger VKM F-33 (IC(50)=1.05 uM) and B.cinerea TSKHA (IC(50)=1.88 uM) and relatively moderate activity towards B.sorokiniana VKM F-1448 (IC(50)=1.55 uM). Displays some inhibitory activity towards P.infestans OSV12. The protein is Non-specific lipid-transfer protein 3 of Nigella sativa (Black cumin).